Reading from the N-terminus, the 311-residue chain is Aspartate carbamoyltransferase catalytic subunit (311 aa).

Residues arginine 59 and threonine 60 each coordinate carbamoyl phosphate. Lysine 87 serves as a coordination point for L-aspartate. Residues arginine 109, histidine 139, and glutamine 142 each coordinate carbamoyl phosphate. L-aspartate contacts are provided by arginine 172 and arginine 224. Positions 265 and 266 each coordinate carbamoyl phosphate.

Belongs to the aspartate/ornithine carbamoyltransferase superfamily. ATCase family. In terms of assembly, heterododecamer (2C3:3R2) of six catalytic PyrB chains organized as two trimers (C3), and six regulatory PyrI chains organized as three dimers (R2).

The enzyme catalyses carbamoyl phosphate + L-aspartate = N-carbamoyl-L-aspartate + phosphate + H(+). It participates in pyrimidine metabolism; UMP biosynthesis via de novo pathway; (S)-dihydroorotate from bicarbonate: step 2/3. Its function is as follows. Catalyzes the condensation of carbamoyl phosphate and aspartate to form carbamoyl aspartate and inorganic phosphate, the committed step in the de novo pyrimidine nucleotide biosynthesis pathway. In Streptococcus pyogenes serotype M18 (strain MGAS8232), this protein is Aspartate carbamoyltransferase catalytic subunit.